We begin with the raw amino-acid sequence, 206 residues long: Two-component response regulator ORR7 (206 aa).

Residues 53–92 (VVPLHDNASAEDDDDDEEDDDEDDDDDDDEDDEEEAAPPY) are disordered. A compositionally biased stretch (acidic residues) spans 61–88 (SAEDDDDDEEDDDEDDDDDDDEDDEEEA). The region spanning 92–205 (YVMAVDDSSV…DISRITSRML (114 aa)) is the Response regulatory domain. D138 carries the 4-aspartylphosphate modification.

Belongs to the ARR family. Type-A subfamily. Two-component system major event consists of a His-to-Asp phosphorelay between a sensor histidine kinase (HK) and a response regulator (RR). In plants, the His-to-Asp phosphorelay involves an additional intermediate named Histidine-containing phosphotransfer protein (HPt). This multistep phosphorelay consists of a His-Asp-His-Asp sequential transfer of a phosphate group between first a His and an Asp of the HK protein, followed by the transfer to a conserved His of the HPt protein and finally the transfer to an Asp in the receiver domain of the RR protein. As to expression, expressed in flowers, and at low levels in roots, mature leaves and shoots.

Functions as a response regulator involved in His-to-Asp phosphorelay signal transduction system. Phosphorylation of the Asp residue in the receiver domain activates the ability of the protein to promote the transcription of target genes. Type-A response regulators seem to act as negative regulators of the cytokinin signaling. This chain is Two-component response regulator ORR7, found in Oryza sativa subsp. indica (Rice).